A 322-amino-acid chain; its full sequence is Lactamase-like protein nscB (322 aa).

The Zn(2+) site is built by H97, H99, D101, and H102. D101 functions as the Proton donor/acceptor in the catalytic mechanism.

This sequence belongs to the metallo-beta-lactamase superfamily. Zn(2+) serves as cofactor.

It functions in the pathway secondary metabolite biosynthesis. Functionally, lactamase-like protein; part of the gene cluster that mediates the biosynthesis of neosartoricin B, a prenylated anthracenone that probably exhibits T-cell antiproliferative activity, suggestive of a physiological role as an immunosuppressive agent. The non-reducing polyketide synthase nscA probably synthesizes and cyclizes the decaketide backbone. The hydrolase nscB then mediates the product release through hydrolysis followed by spontaneous decarboxylation. The prenyltransferase nscD catalyzes the addition of the dimethylallyl group to the aromatic C5. The FAD-dependent monooxygenase nscC is then responsible for the stereospecific hydroxylation at C2. Neosartoricin B can be converted into two additional compounds neosartoricins C and D. Neosartoricin C is a spirocyclic compound that is cyclized through the attack of C3 hydroxyl on C14, followed by dehydration. On the other hand, neosartoricin D is a further cyclized compound in which attack of C2 on C14 in neosartoricin C results in the formation of the acetal-containing dioxabicyclo-octanone ring. Both of these compounds are novel and possibly represent related metabolites of the gene cluster. The chain is Lactamase-like protein nscB from Trichophyton rubrum (strain ATCC MYA-4607 / CBS 118892) (Athlete's foot fungus).